A 317-amino-acid chain; its full sequence is Melanocyte-stimulating hormone receptor (317 aa).

The Extracellular portion of the chain corresponds to 1–37 (MPMQEPQRRLLGPFNSTRTGAPHLELSANQTGPWCLH). Residues N15 and N29 are each glycosylated (N-linked (GlcNAc...) asparagine). The helical transmembrane segment at 38 to 63 (VSIPDGLFLSLGLVSLVENVLVVISI) threads the bilayer. The Cytoplasmic segment spans residues 64–72 (AKNQNLHSP). The chain crosses the membrane as a helical span at residues 73 to 93 (MYYFICCLALSDLLVSVSIVL). Residues 94 to 118 (ETTLILVLEAGALATRVTVVQQLDN) are Extracellular-facing. Residues 119-140 (VIDVLICASMVSSLCFLGAIAV) form a helical membrane-spanning segment. Topologically, residues 141-163 (DRYISIFYALRYHSIVTLPRARW) are cytoplasmic. Residues 164–183 (AIVAIWVASISSSTLFVAYY) traverse the membrane as a helical segment. The Extracellular segment spans residues 184–191 (NHTAVLLC). The chain crosses the membrane as a helical span at residues 192 to 211 (LVTFFLATLALMVVLYVHML). The Cytoplasmic segment spans residues 212-240 (ARAHQHAQAIAQLHKRQHLVHQGFRLKGA). The helical transmembrane segment at 241–266 (ATLTILLGIFFLCWGPFFLYLTLIVL) threads the bilayer. At 267–279 (CPKHPTCGCFFKN) the chain is on the extracellular side. A helical transmembrane segment spans residues 280–300 (LNLFLALIIFNSIVDPLIYAF). The Cytoplasmic portion of the chain corresponds to 301 to 317 (RSQELRMTLKEVLLCSW). C315 is lipidated: S-palmitoyl cysteine.

It belongs to the G-protein coupled receptor 1 family. In terms of assembly, interacts with MGRN1, but does not undergo MGRN1-mediated ubiquitination; this interaction competes with GNAS-binding and thus inhibits agonist-induced cAMP production. Interacts with OPN3; the interaction results in a decrease in MC1R-mediated cAMP signaling and ultimately a decrease in melanin production in melanocytes.

Its subcellular location is the cell membrane. Its function is as follows. Receptor for MSH (alpha, beta and gamma) and ACTH. The activity of this receptor is mediated by G proteins which activate adenylate cyclase. Mediates melanogenesis, the production of eumelanin (black/brown) and phaeomelanin (red/yellow), via regulation of cAMP signaling in melanocytes. This is Melanocyte-stimulating hormone receptor (MC1R) from Chaetodipus penicillatus (Desert pocket mouse).